The sequence spans 109 residues: RYamide neuropeptides (109 aa).

Positions 1–22 are cleaved as a signal peptide; the sequence is MNECVNKLLHLKFLFYFILGIQ. Tyr-33 is subject to Tyrosine amide. Residues 36–53 constitute a propeptide that is removed on maturation; sequence STTYDESLKSRRIFIVPR. Tyr-63 carries the tyrosine amide modification. Positions 67 to 109 are excised as a propeptide; the sequence is SGKYLCLSREINKLIVRKRLRNNDKERTPTLSFITKHFLMRNT.

Its subcellular location is the secreted. Its function is as follows. Neuropeptides RYamide-1 and RYamide-2 are ligands for the G-protein coupled receptor RYa-R. May suppress feeding behavior. The polypeptide is RYamide neuropeptides (Drosophila melanogaster (Fruit fly)).